The primary structure comprises 137 residues: Small ribosomal subunit protein uS12 (137 aa).

The tract at residues M1–F28 is disordered. D102 is subject to 3-methylthioaspartic acid.

Belongs to the universal ribosomal protein uS12 family. Part of the 30S ribosomal subunit. Contacts proteins S8 and S17. May interact with IF1 in the 30S initiation complex.

Its function is as follows. With S4 and S5 plays an important role in translational accuracy. Interacts with and stabilizes bases of the 16S rRNA that are involved in tRNA selection in the A site and with the mRNA backbone. Located at the interface of the 30S and 50S subunits, it traverses the body of the 30S subunit contacting proteins on the other side and probably holding the rRNA structure together. The combined cluster of proteins S8, S12 and S17 appears to hold together the shoulder and platform of the 30S subunit. The sequence is that of Small ribosomal subunit protein uS12 from Staphylococcus carnosus (strain TM300).